Reading from the N-terminus, the 160-residue chain is SsrA-binding protein (160 aa).

This sequence belongs to the SmpB family.

It localises to the cytoplasm. Its function is as follows. Required for rescue of stalled ribosomes mediated by trans-translation. Binds to transfer-messenger RNA (tmRNA), required for stable association of tmRNA with ribosomes. tmRNA and SmpB together mimic tRNA shape, replacing the anticodon stem-loop with SmpB. tmRNA is encoded by the ssrA gene; the 2 termini fold to resemble tRNA(Ala) and it encodes a 'tag peptide', a short internal open reading frame. During trans-translation Ala-aminoacylated tmRNA acts like a tRNA, entering the A-site of stalled ribosomes, displacing the stalled mRNA. The ribosome then switches to translate the ORF on the tmRNA; the nascent peptide is terminated with the 'tag peptide' encoded by the tmRNA and targeted for degradation. The ribosome is freed to recommence translation, which seems to be the essential function of trans-translation. This Marinobacter nauticus (strain ATCC 700491 / DSM 11845 / VT8) (Marinobacter aquaeolei) protein is SsrA-binding protein.